Consider the following 819-residue polypeptide: Zinc finger protein with KRAB and SCAN domains 5 (819 aa).

In terms of domain architecture, SCAN box spans 51 to 132; that stretch reads QRFKHFQYHE…AVIESIQREL (82 aa). Residues K214, K246, and K302 each participate in a glycyl lysine isopeptide (Lys-Gly) (interchain with G-Cter in SUMO2) cross-link. A KRAB domain is found at 216–287; that stretch reads EDVADVAVSF…HWVAAERTEK (72 aa). 2 disordered regions span residues 236-263 and 283-340; these read SQKSLGRDSRKEDCESTTPVDYEPKEGN and ERTE…GERG. Residues 240–249 show a composition bias toward basic and acidic residues; it reads LGRDSRKEDC. A compositionally biased stretch (basic and acidic residues) spans 329–340; sequence VNRKQKSNGERG. 9 C2H2-type zinc fingers span residues 341-363, 369-391, 397-419, 425-447, 540-562, 568-590, 596-618, 624-646, and 652-674; these read HRCGDCGKFFLQASNFIQHRRIH, FKCGECGKSYNQRVHLTQHQRVH, YKCQVCGKAFRVSSHLVQHHSVH, YGCNECGKSFGRHSHLIEHLKRH, HQCNECGKSFIQSAHLIQHRRIH, FRCEECGKSYNQRVHLTQHHRVH, YACHLCGKAFRVRSHLVQHQSVH, FKCNECGKGFGRRSHLAGHLRLH, and HQCHECGEIFFQYVSLLEHQVLH. Residue K700 forms a Glycyl lysine isopeptide (Lys-Gly) (interchain with G-Cter in SUMO2) linkage. 3 C2H2-type zinc fingers span residues 708 to 730, 764 to 786, and 792 to 814; these read YQCDSCGKAFSYSSDLIQHYRTH, HQCNECGRGFSLKSHLSQHQRIH, and LQCKECGMSFSWSCSLFKHLRSH. K776 participates in a covalent cross-link: Glycyl lysine isopeptide (Lys-Gly) (interchain with G-Cter in SUMO2).

The protein belongs to the krueppel C2H2-type zinc-finger protein family. Testis specific.

Its subcellular location is the nucleus. In terms of biological role, may be involved in transcriptional regulation. The sequence is that of Zinc finger protein with KRAB and SCAN domains 5 (Zkscan5) from Mus musculus (Mouse).